Consider the following 311-residue polypeptide: 4-hydroxyproline 2-epimerase (311 aa).

C88 serves as the catalytic Proton acceptor. Substrate contacts are provided by residues 89–90 (GH), H208, and D232. C236 acts as the Proton donor in catalysis. 237–238 (GT) contributes to the substrate binding site.

This sequence belongs to the proline racemase family.

The catalysed reaction is trans-4-hydroxy-L-proline = cis-4-hydroxy-D-proline. In terms of biological role, catalyzes the epimerization of trans-4-hydroxy-L-proline (t4LHyp) to cis-4-hydroxy-D-proline (c4DHyp). Is likely involved in a degradation pathway that converts t4LHyp to alpha-ketoglutarate. Displays no proline racemase activity. This is 4-hydroxyproline 2-epimerase from Chromohalobacter salexigens (strain ATCC BAA-138 / DSM 3043 / CIP 106854 / NCIMB 13768 / 1H11).